The sequence spans 334 residues: Phospho-N-acetylmuramoyl-pentapeptide-transferase (334 aa).

Transmembrane regions (helical) follow at residues 5–25 (VVWL…PVTI), 52–72 (PTMG…VLLV), 81–101 (GLVV…DDFI), 116–136 (KILG…FKLG), 148–168 (GISF…VLLG), 181–200 (GLAS…LALV), 230–250 (VFMG…GAVV), 256–276 (LLVV…IQVI), and 309–329 (FWLL…DFWL).

The protein belongs to the glycosyltransferase 4 family. MraY subfamily. Mg(2+) is required as a cofactor.

The protein localises to the cell membrane. The enzyme catalyses UDP-N-acetyl-alpha-D-muramoyl-L-alanyl-gamma-D-glutamyl-meso-2,6-diaminopimeloyl-D-alanyl-D-alanine + di-trans,octa-cis-undecaprenyl phosphate = di-trans,octa-cis-undecaprenyl diphospho-N-acetyl-alpha-D-muramoyl-L-alanyl-D-glutamyl-meso-2,6-diaminopimeloyl-D-alanyl-D-alanine + UMP. It functions in the pathway cell wall biogenesis; peptidoglycan biosynthesis. Catalyzes the initial step of the lipid cycle reactions in the biosynthesis of the cell wall peptidoglycan: transfers peptidoglycan precursor phospho-MurNAc-pentapeptide from UDP-MurNAc-pentapeptide onto the lipid carrier undecaprenyl phosphate, yielding undecaprenyl-pyrophosphoryl-MurNAc-pentapeptide, known as lipid I. This Desulforamulus reducens (strain ATCC BAA-1160 / DSM 100696 / MI-1) (Desulfotomaculum reducens) protein is Phospho-N-acetylmuramoyl-pentapeptide-transferase.